Here is a 513-residue protein sequence, read N- to C-terminus: Teichoic acid ribitol-phosphate polymerase TarK (513 aa).

Belongs to the CDP-glycerol glycerophosphotransferase family.

The protein localises to the cell membrane. The catalysed reaction is 4-O-[di(2R)-glycerylphospho]-N-acetyl-beta-D-mannosaminyl-(1-&gt;4)-N-acetyl-alpha-D-glucosaminyl di-trans,octa-cis-undecaprenyl diphosphate + n CDP-L-ribitol = 4-O-[(D-ribitylphospho)(n)-di{(2R)-glycerylphospho}]-N-acetyl-beta-D-mannosaminyl-(1-&gt;4)-N-acetyl-alpha-D-glucosaminyl di-trans,octa-cis-undecaprenyl diphosphate + n CMP + n H(+). The protein operates within cell wall biogenesis; poly(ribitol phosphate) teichoic acid biosynthesis. Functionally, can catalyze the polymerization of the main chain of the major teichoic acid by sequential transfer of ribitol phosphate units from CDP-ribitol to the second glycerol phosphate attached to the disaccharide linkage unit. The polypeptide is Teichoic acid ribitol-phosphate polymerase TarK (tarK) (Staphylococcus aureus (strain NCTC 8325 / PS 47)).